We begin with the raw amino-acid sequence, 249 residues long: Protein obstructor-E (249 aa).

An N-terminal signal peptide occupies residues 1-21; sequence MAKILISALLCVAMFGSMALG. In terms of domain architecture, Chitin-binding type-2 1 spans 22 to 80; that stretch reads SPECPTPNGRFASGDQCDSYTECQDGTPVEKLCPDGLLFHQRTKATGECTYAPYSTCKE. An intrachain disulfide couples Cys54 to Cys70. Residue Asn88 is glycosylated (N-linked (GlcNAc...) asparagine). Chitin-binding type-2 domains follow at residues 90 to 148 and 170 to 227; these read TEEC…SCNA and VDVS…ECYA. Intrachain disulfides connect Cys124-Cys137 and Cys203-Cys216.

In terms of tissue distribution, uniformly expressed throughout the cuticle of third instar larva.

It is found in the secreted. It localises to the extracellular space. Its subcellular location is the extracellular matrix. Its function is as follows. Chitin-binding protein that is important for the longitudinal contraction and lateral expansion of the larval cuticle during its conversion into the oval-shaped puparium case. Essential for survival to the second instar larval stage. Confers the orientated contractility and expandability of the larval cuticle by regulating the arrangement of chitin and the formation of supracellular ridges on the cuticle of third instar larvae. Essential for determining pupal body shape; required for the orientated shape change of the cuticle during metamorphosis which involves changes in the morphology of the supracellular ridges. Mainly involved in regulating pupal shape. Functionally, mainly involved in larvae survival, possibly by maintaining the normal morphology of the larval hindgut during development. This Drosophila melanogaster (Fruit fly) protein is Protein obstructor-E.